Here is a 434-residue protein sequence, read N- to C-terminus: Glutamate-1-semialdehyde 2,1-aminomutase 2 (434 aa).

Residue K270 is modified to N6-(pyridoxal phosphate)lysine.

Belongs to the class-III pyridoxal-phosphate-dependent aminotransferase family. HemL subfamily. In terms of assembly, homodimer. Requires pyridoxal 5'-phosphate as cofactor.

Its subcellular location is the cytoplasm. It catalyses the reaction (S)-4-amino-5-oxopentanoate = 5-aminolevulinate. It functions in the pathway porphyrin-containing compound metabolism; protoporphyrin-IX biosynthesis; 5-aminolevulinate from L-glutamyl-tRNA(Glu): step 2/2. This is Glutamate-1-semialdehyde 2,1-aminomutase 2 from Bacillus cereus (strain G9842).